A 397-amino-acid polypeptide reads, in one-letter code: P-selectin glycoprotein ligand 1 (397 aa).

The first 17 residues, Met1–Ser17, serve as a signal peptide directing secretion. Positions Leu18–Arg41 are excised as a propeptide. Residues Leu18–Cys307 are Extracellular-facing. Tyr54 carries the sulfotyrosine modification. Thr58 carries an O-linked (GalNAc...) threonine glycan. Asn66 is a glycosylation site (N-linked (GlcNAc...) asparagine). The interval Thr89–Asn261 is disordered. Residues Ser120 to Ala198 are compositionally biased toward polar residues. A run of 10 repeats spans residues Gln126–Val135, Gln136–Ser145, Gln146–Ser155, Gln156–Ser165, Gln166–Ser175, Gln176–Ser185, Gln186–Ser195, Gln196–Ser205, Lys206–Ser215, and Lys216–Thr225. The 10 X 10 AA tandem repeats stretch occupies residues Gln126–Thr225. Over residues Leu236–Asn261 the composition is skewed to polar residues. N-linked (GlcNAc...) asparagine glycosylation is present at Asn261. A helical transmembrane segment spans residues Leu308–Leu328. The Cytoplasmic segment spans residues Ala329–Pro397. Residues Pro364–Leu390 form a disordered region. Basic and acidic residues predominate over residues Gln375 to Leu390. Thr391 carries the phosphothreonine modification. The residue at position 394 (Ser394) is a Phosphoserine.

As to quaternary structure, homodimer; disulfide-linked. Interacts with P- and E-selectins, through their lectin/EGF domains. Interaction with P-selectin requires sialyl Lewis X glycan modification and tyrosine sulfation, probably on Tyr-54, for high affinity binding. Dimerization appears not to be required for P-selectin/SELP binding. Interacts with SNX20. Interacts with MSN and SYK; mediates SYK activation downstream of SELPLG. Interacts with HAVCR1. In terms of processing, displays complex, core-2, sialylated and fucosylated O-linked oligosaccharides, at least some of which appear to contain poly-N-acetyllactosamine with varying degrees of substitution. Mainly disialylated or neutral forms of the core-2 tetrasaccharide, Galbeta1--&gt;4GlcNAcbeta1--&gt;6(Galbeta1--&gt;3)GalNAcOH. The GlcN:GalN ratio is approximately 2:1 and the Man:Fuc ratio 3:5. Contains about 14% fucose with alpha-1,3 linkage present in two forms: One species is a disialylated, monofucosylated glycan, and the other, a monosialylated, trifucosylated glycan with a polylactosamine backbone. The fucosylated forms carry the Lewis antigen and are important for interaction with selectins and for functioning. No sulfated O-glycans. Some N-glycosylation. Highly expressed in blood, bone marrow, brain, adipose tissue, spleen, and thymus. Also expressed in heart, kidney, liver, muscle, ovary, and stomach.

It localises to the cell membrane. In terms of biological role, a SLe(x)-type proteoglycan, which through high affinity, calcium-dependent interactions with E- and P-selectins, mediates rapid rolling of leukocytes over vascular surfaces during the initial steps in inflammation. Critical for the initial leukocyte capture. This is P-selectin glycoprotein ligand 1 (Selplg) from Mus musculus (Mouse).